The chain runs to 267 residues: MIILIDSGNSRLKVGWFDPDAPQAAREPAPVAFDNLDLDALGRWLATLPRRPQRALGVNVAGLARGQAIAATLRAGGCDIRWLRAQPLAMGLRNGYRNPDQLGADRWACMVGVLARQPSVHPPLLVASFGTATTLDTIGPDNVFPGGLILPGPAMMRGALAHGTAHLPLADGLVADYPIDTHQAIASGIAAAQAGAIVRQWLAGRQRYGQAPEIYVAGGGWPEVRQEAERLLAVTGAAFGATPRPTYLDSPVLDGLAALAAHGAPTA.

6 to 13 provides a ligand contact to ATP; sequence DSGNSRLK. Substrate is bound by residues Tyr-96 and 103-106; that span reads GADR. Asp-105 functions as the Proton acceptor in the catalytic mechanism. Thr-131 is a binding site for ATP. Thr-181 serves as a coordination point for substrate.

Belongs to the type III pantothenate kinase family. In terms of assembly, homodimer. NH4(+) serves as cofactor. It depends on K(+) as a cofactor.

Its subcellular location is the cytoplasm. The enzyme catalyses (R)-pantothenate + ATP = (R)-4'-phosphopantothenate + ADP + H(+). Its pathway is cofactor biosynthesis; coenzyme A biosynthesis; CoA from (R)-pantothenate: step 1/5. Its function is as follows. Catalyzes the phosphorylation of pantothenate (Pan), the first step in CoA biosynthesis. This is Type III pantothenate kinase from Bordetella bronchiseptica (strain ATCC BAA-588 / NCTC 13252 / RB50) (Alcaligenes bronchisepticus).